The primary structure comprises 354 residues: Phospho-N-acetylmuramoyl-pentapeptide-transferase (354 aa).

10 helical membrane-spanning segments follow: residues 16–36 (YITVRAGIAFFFAFFLTLYLM), 66–86 (TPTMGGVVFIFSALLASLLTV), 88–108 (IHNPYVLGGFLTILGFLAIGV), 130–150 (FFLQILVAFVVSLFLYEYAHL), 168–188 (IFGILFWTLVIVATSNAVNLT), 193–213 (GLATVPSIMALTTLAIITYIT), 227–247 (IIGVGEVSIIAAAFAGSLIGF), 257–277 (VFMGDSGSLTLGAFIGYMAII), 282–302 (VLLILIGFVFVMEALSVIIQV), and 331–351 (KIIVRFWIIALISNLIALITL).

This sequence belongs to the glycosyltransferase 4 family. MraY subfamily. Requires Mg(2+) as cofactor.

It localises to the cell inner membrane. The enzyme catalyses UDP-N-acetyl-alpha-D-muramoyl-L-alanyl-gamma-D-glutamyl-meso-2,6-diaminopimeloyl-D-alanyl-D-alanine + di-trans,octa-cis-undecaprenyl phosphate = di-trans,octa-cis-undecaprenyl diphospho-N-acetyl-alpha-D-muramoyl-L-alanyl-D-glutamyl-meso-2,6-diaminopimeloyl-D-alanyl-D-alanine + UMP. It functions in the pathway cell wall biogenesis; peptidoglycan biosynthesis. Its function is as follows. Catalyzes the initial step of the lipid cycle reactions in the biosynthesis of the cell wall peptidoglycan: transfers peptidoglycan precursor phospho-MurNAc-pentapeptide from UDP-MurNAc-pentapeptide onto the lipid carrier undecaprenyl phosphate, yielding undecaprenyl-pyrophosphoryl-MurNAc-pentapeptide, known as lipid I. The protein is Phospho-N-acetylmuramoyl-pentapeptide-transferase of Nitratiruptor sp. (strain SB155-2).